The chain runs to 618 residues: MSDVIRLLPDSIANQIAAGEVIQRPASVVKELLENALDAGASIIRLDVREAGRELIRVTDNGKGMSQSDARMAFERHATSKIASFQDLFSLRTMGFRGEALASIAAVAQVELLTRRAEDELGTRLTINGSEVGEVATVTSPQGCILCVKNLFYNVPARRKFLKSNETEFRHILTEYERVALVNPQVAFSIYHSGELVQDLPPSPLKKRILDVFGKRMEKDLIPIGIKSPITNISGFVGRPDGARKRGALQYFFVNGRFMRHPYFHKAVMAAYEAIIPQGTMPNYFLYFDLEPSQIDVNIHPTKTEIKFSDEQAIFKLIGVVIREALSSSNAVPAIDFDRKELIDIPAYQGPGKNVVRPPVDLDPSYNPFKETGLTEPIRSSRRQSPDMGWNELFKQFEAKRDAEKMAEPPIRSEGLFASTDFTPSAVSATPSTDMLCYVHRGRYLVTTLSRGLALVDFHRAHKRILYDRFMADESRRHIEQQQLLFPELLEFNPSDASAVKAAVDELQSVGFDLSPLGVSSYSLLAAPVQIIDCAADVVRDVIHTTLEDGRSSHEQMLELIATQIAEYQAIPCGKTPTAEEASDLLAELFASNDSTYTPDGKLIVSIIEEADIARRFE.

The protein belongs to the DNA mismatch repair MutL/HexB family.

In terms of biological role, this protein is involved in the repair of mismatches in DNA. It is required for dam-dependent methyl-directed DNA mismatch repair. May act as a 'molecular matchmaker', a protein that promotes the formation of a stable complex between two or more DNA-binding proteins in an ATP-dependent manner without itself being part of a final effector complex. This chain is DNA mismatch repair protein MutL, found in Porphyromonas gingivalis (strain ATCC 33277 / DSM 20709 / CIP 103683 / JCM 12257 / NCTC 11834 / 2561).